The chain runs to 190 residues: Thiamine biosynthesis protein X (190 aa).

The first 22 residues, methionine 1–alanine 22, serve as a signal peptide directing secretion. The N-palmitoyl cysteine moiety is linked to residue cysteine 23. Residue cysteine 23 is the site of S-diacylglycerol cysteine attachment. Residues serine 43–aspartate 68 are disordered. Low complexity predominate over residues threonine 47–alanine 63.

Its subcellular location is the cell membrane. Is necessary for biosynthesis of the 4-methyl-5-(beta-hydroxyethyl)thiazol component from which thiamine is formed. The protein is Thiamine biosynthesis protein X (thiX) of Corynebacterium glutamicum (strain ATCC 13032 / DSM 20300 / JCM 1318 / BCRC 11384 / CCUG 27702 / LMG 3730 / NBRC 12168 / NCIMB 10025 / NRRL B-2784 / 534).